The following is a 92-amino-acid chain: Ictacalcin (92 aa).

EF-hand domains follow at residues Ile-12–Asn-47 and Ser-49–Leu-84. Residues Thr-27, Glu-32, Asp-62, Asn-64, Asp-66, and Glu-73 each contribute to the Ca(2+) site.

This sequence belongs to the S-100 family. As to expression, abundant in epithelial cells of olfactory rosette, barbel, skin and gill but not brain or muscle.

Its function is as follows. Plays an important role in catfish calcium homeostasis. In Ictalurus punctatus (Channel catfish), this protein is Ictacalcin.